The chain runs to 318 residues: Taste receptor type 2 member 117 (318 aa).

The Extracellular portion of the chain corresponds to 1 to 16 (MQHNLKTIFVISHSTL). A helical membrane pass occupies residues 17–37 (TIILFTELVTGIIGNGFMALV). At 38–53 (HCMDWLRRKKISLVNQ) the chain is on the cytoplasmic side. A helical transmembrane segment spans residues 54–74 (ILTALAISRIFQLCLLFISLV). Residues 75-93 (ISFSYPDLTTTSLIKVTCN) are Extracellular-facing. Residues 94-114 (LWIIVNHFNIWLATCLGIFYF) traverse the membrane as a helical segment. Residues 115–134 (LKISNFSNSLFLYLKWRVEK) are Cytoplasmic-facing. A helical membrane pass occupies residues 135–155 (VVLVTLLVSLVLLTLNSLLIN). Residues 156-189 (LEINICINEYQRNITYSFNSYYHANCHRQMLSLH) are Extracellular-facing. N-linked (GlcNAc...) asparagine glycosylation occurs at Asn168. Residues 190–210 (IIFLSVPFVLSLSTFLLLIFS) traverse the membrane as a helical segment. Over 211-238 (LGTHHKKMQQHVQGRRDASTMAHFKALQ) the chain is Cytoplasmic. The chain crosses the membrane as a helical span at residues 239 to 259 (TVIAFLLLYSIFILSVLVQIW). Topologically, residues 260–268 (KYELLKKNL) are extracellular. Residues 269–289 (FILFCQVAYVAFPSFHSYILI) traverse the membrane as a helical segment. The Cytoplasmic segment spans residues 290–318 (LGDMKMRQACLSVLWWQKFRKNYVEPLDL).

This sequence belongs to the G-protein coupled receptor T2R family.

It localises to the membrane. Putative taste receptor which may play a role in the perception of bitterness. The chain is Taste receptor type 2 member 117 from Rattus norvegicus (Rat).